Consider the following 417-residue polypeptide: Gamma-glutamyl phosphate reductase (417 aa).

It belongs to the gamma-glutamyl phosphate reductase family.

The protein localises to the cytoplasm. It carries out the reaction L-glutamate 5-semialdehyde + phosphate + NADP(+) = L-glutamyl 5-phosphate + NADPH + H(+). It functions in the pathway amino-acid biosynthesis; L-proline biosynthesis; L-glutamate 5-semialdehyde from L-glutamate: step 2/2. Functionally, catalyzes the NADPH-dependent reduction of L-glutamate 5-phosphate into L-glutamate 5-semialdehyde and phosphate. The product spontaneously undergoes cyclization to form 1-pyrroline-5-carboxylate. The protein is Gamma-glutamyl phosphate reductase of Legionella pneumophila (strain Paris).